Reading from the N-terminus, the 434-residue chain is D-amino acid dehydrogenase (434 aa).

3–17 is an FAD binding site; that stretch reads VLVLGSGVIGTASAY.

It belongs to the DadA oxidoreductase family. The cofactor is FAD.

The enzyme catalyses a D-alpha-amino acid + A + H2O = a 2-oxocarboxylate + AH2 + NH4(+). It participates in amino-acid degradation; D-alanine degradation; NH(3) and pyruvate from D-alanine: step 1/1. Oxidative deamination of D-amino acids. The polypeptide is D-amino acid dehydrogenase (Pseudomonas putida (strain GB-1)).